The following is a 134-amino-acid chain: Putative nickel-responsive regulator (134 aa).

Ni(2+) is bound by residues His-78, His-89, His-91, and Cys-97.

It belongs to the transcriptional regulatory CopG/NikR family. Ni(2+) serves as cofactor.

In terms of biological role, transcriptional regulator. The chain is Putative nickel-responsive regulator from Chlorobium phaeobacteroides (strain DSM 266 / SMG 266 / 2430).